Reading from the N-terminus, the 361-residue chain is Histidinol-phosphate aminotransferase (361 aa).

Position 219 is an N6-(pyridoxal phosphate)lysine (K219).

It belongs to the class-II pyridoxal-phosphate-dependent aminotransferase family. Histidinol-phosphate aminotransferase subfamily. In terms of assembly, homodimer. The cofactor is pyridoxal 5'-phosphate.

It catalyses the reaction L-histidinol phosphate + 2-oxoglutarate = 3-(imidazol-4-yl)-2-oxopropyl phosphate + L-glutamate. Its pathway is amino-acid biosynthesis; L-histidine biosynthesis; L-histidine from 5-phospho-alpha-D-ribose 1-diphosphate: step 7/9. This Acinetobacter baumannii (strain ACICU) protein is Histidinol-phosphate aminotransferase.